We begin with the raw amino-acid sequence, 118 residues long: UPF0342 protein BPUM_0928 (118 aa).

It belongs to the UPF0342 family.

The protein is UPF0342 protein BPUM_0928 of Bacillus pumilus (strain SAFR-032).